Consider the following 412-residue polypeptide: Multifunctional CCA protein (412 aa).

ATP contacts are provided by G8 and R11. Residues G8 and R11 each contribute to the CTP site. Residues D21 and D23 each contribute to the Mg(2+) site. R91, R137, and R140 together coordinate ATP. CTP contacts are provided by R91, R137, and R140. The region spanning 228–329 (TGIHTLMTLS…VKLFDSIDAW (102 aa)) is the HD domain.

The protein belongs to the tRNA nucleotidyltransferase/poly(A) polymerase family. Bacterial CCA-adding enzyme type 1 subfamily. As to quaternary structure, monomer. Can also form homodimers and oligomers. It depends on Mg(2+) as a cofactor. Ni(2+) serves as cofactor.

The catalysed reaction is a tRNA precursor + 2 CTP + ATP = a tRNA with a 3' CCA end + 3 diphosphate. It carries out the reaction a tRNA with a 3' CCA end + 2 CTP + ATP = a tRNA with a 3' CCACCA end + 3 diphosphate. Catalyzes the addition and repair of the essential 3'-terminal CCA sequence in tRNAs without using a nucleic acid template. Adds these three nucleotides in the order of C, C, and A to the tRNA nucleotide-73, using CTP and ATP as substrates and producing inorganic pyrophosphate. tRNA 3'-terminal CCA addition is required both for tRNA processing and repair. Also involved in tRNA surveillance by mediating tandem CCA addition to generate a CCACCA at the 3' terminus of unstable tRNAs. While stable tRNAs receive only 3'-terminal CCA, unstable tRNAs are marked with CCACCA and rapidly degraded. The sequence is that of Multifunctional CCA protein from Escherichia coli O6:H1 (strain CFT073 / ATCC 700928 / UPEC).